The sequence spans 219 residues: Ribonuclease HII (219 aa).

Residues 10–219 (HLEAGTDEAG…LLPEQTVLDL (210 aa)) enclose the RNase H type-2 domain. Residues aspartate 16, glutamate 17, and aspartate 108 each contribute to the a divalent metal cation site.

It belongs to the RNase HII family. Requires Mn(2+) as cofactor. It depends on Mg(2+) as a cofactor.

It localises to the cytoplasm. The catalysed reaction is Endonucleolytic cleavage to 5'-phosphomonoester.. Endonuclease that specifically degrades the RNA of RNA-DNA hybrids. This is Ribonuclease HII from Flavobacterium psychrophilum (strain ATCC 49511 / DSM 21280 / CIP 103535 / JIP02/86).